The primary structure comprises 459 residues: MTAETETGIPGVPGTQAADQFNELPAHVWPRNAVRQEDGVVTVAGVPLPDLAEEYGTPLFVVDEDDFRARCRDMASAFGGPDRVHYASKAFLSKTVARWVDEEGLSLDIASENELGIALAADFPGERITAHGNNKDASFLRACVRNNLGHVVLDSAQELELLDYIAAGEGKVQPVLIRVKPGIEAHTHEFIATSHEDQKFGFSLASGAAFDAARAAVNAENLELVGLHCHVGSQVFDAQGFSLAAERVLELYSRIHDELGVTLAELDLGGGYGIAYTAAEEPLNVVEVAHDLLTAVGKTAAELGIEAPTVLVEPGRAIAGPSTVTVYEVGTIKDVDVDDETTRRYISVDGGMSDNIRPALYGAEYDARVVSRFTEGETTNTRVVGSHCESGDILINEATYPSDIHTGDLLALAATGAYCYAMSSRYNAFARPAVVSVRAGAAKLMLRRETLDDILSLEV.

K89 is subject to N6-(pyridoxal phosphate)lysine. Pyridoxal 5'-phosphate-binding positions include G271 and 313–316 (EPGR). Substrate contacts are provided by R316, R357, and Y361. C388 acts as the Proton donor in catalysis. Residues E389 and Y418 each contribute to the substrate site. Y418 provides a ligand contact to pyridoxal 5'-phosphate.

This sequence belongs to the Orn/Lys/Arg decarboxylase class-II family. LysA subfamily. As to quaternary structure, homodimer. The cofactor is pyridoxal 5'-phosphate.

The enzyme catalyses meso-2,6-diaminopimelate + H(+) = L-lysine + CO2. It participates in amino-acid biosynthesis; L-lysine biosynthesis via DAP pathway; L-lysine from DL-2,6-diaminopimelate: step 1/1. Specifically catalyzes the decarboxylation of meso-diaminopimelate (meso-DAP) to L-lysine. In Corynebacterium efficiens (strain DSM 44549 / YS-314 / AJ 12310 / JCM 11189 / NBRC 100395), this protein is Diaminopimelate decarboxylase.